A 1162-amino-acid chain; its full sequence is Isoleucine--tRNA ligase (1162 aa).

The 'HIGH' region motif lies at 50 to 60; sequence PSANGMPGIHH. The short motif at 710–714 is the 'KMSKS' region element; it reads KMSKR. Lys713 is a binding site for ATP.

It belongs to the class-I aminoacyl-tRNA synthetase family. IleS type 2 subfamily. Monomer. The cofactor is Zn(2+).

Its subcellular location is the cytoplasm. It catalyses the reaction tRNA(Ile) + L-isoleucine + ATP = L-isoleucyl-tRNA(Ile) + AMP + diphosphate. Functionally, catalyzes the attachment of isoleucine to tRNA(Ile). As IleRS can inadvertently accommodate and process structurally similar amino acids such as valine, to avoid such errors it has two additional distinct tRNA(Ile)-dependent editing activities. One activity is designated as 'pretransfer' editing and involves the hydrolysis of activated Val-AMP. The other activity is designated 'posttransfer' editing and involves deacylation of mischarged Val-tRNA(Ile). In Bacteroides thetaiotaomicron (strain ATCC 29148 / DSM 2079 / JCM 5827 / CCUG 10774 / NCTC 10582 / VPI-5482 / E50), this protein is Isoleucine--tRNA ligase.